The following is a 500-amino-acid chain: Lycopene beta cyclase, chloroplastic (500 aa).

The transit peptide at 1 to 81 (MDTLLKTPNK…ELPMYDPSKG (81 aa)) directs the protein to the chloroplast. 86–114 (LAVVGGGPAGLAVAQQVSEAGLSVVSIDP) contributes to the NAD(+) binding site.

Belongs to the lycopene cyclase family.

It is found in the plastid. The protein localises to the chloroplast. It carries out the reaction a carotenoid psi-end group = a carotenoid beta-end derivative. The protein operates within carotenoid biosynthesis; beta-carotene biosynthesis. Its pathway is carotenoid biosynthesis; beta-zeacarotene biosynthesis. Catalyzes the double cyclization reaction which converts lycopene to beta-carotene and neurosporene to beta-zeacarotene. The protein is Lycopene beta cyclase, chloroplastic (LCY1) of Nicotiana tabacum (Common tobacco).